We begin with the raw amino-acid sequence, 263 residues long: Phosphatidylglycerol--prolipoprotein diacylglyceryl transferase (263 aa).

3 helical membrane-spanning segments follow: residues 17-37 (LSVR…IFLG), 56-76 (LLFY…VLFY), and 88-108 (IFAV…VLVA). Arg-139 serves as a coordination point for a 1,2-diacyl-sn-glycero-3-phospho-(1'-sn-glycerol). Transmembrane regions (helical) follow at residues 176–196 (QLYH…WFTA) and 236–256 (ISMG…MVVF).

Belongs to the Lgt family.

Its subcellular location is the cell inner membrane. The catalysed reaction is L-cysteinyl-[prolipoprotein] + a 1,2-diacyl-sn-glycero-3-phospho-(1'-sn-glycerol) = an S-1,2-diacyl-sn-glyceryl-L-cysteinyl-[prolipoprotein] + sn-glycerol 1-phosphate + H(+). It functions in the pathway protein modification; lipoprotein biosynthesis (diacylglyceryl transfer). Its function is as follows. Catalyzes the transfer of the diacylglyceryl group from phosphatidylglycerol to the sulfhydryl group of the N-terminal cysteine of a prolipoprotein, the first step in the formation of mature lipoproteins. This is Phosphatidylglycerol--prolipoprotein diacylglyceryl transferase from Dechloromonas aromatica (strain RCB).